We begin with the raw amino-acid sequence, 141 residues long: Large ribosomal subunit protein uL16c (141 aa).

Belongs to the universal ribosomal protein uL16 family. In terms of assembly, part of the 50S ribosomal subunit.

Its subcellular location is the plastid. The protein localises to the chloroplast. In Zygnema circumcarinatum (Green alga), this protein is Large ribosomal subunit protein uL16c.